A 640-amino-acid polypeptide reads, in one-letter code: Spindle assembly abnormal protein 6 homolog (640 aa).

The region spanning 40 to 92 (VHKKDLAVRLTDDADPFFLYNLVISEEDFQSLKSQQGLLVDFSAFPQKFIDLL) is the PISA domain. A coiled-coil region spans residues 154-475 (LARCLKCLKE…KQLLKTNENV (322 aa)).

Nine homodimers form a cartwheel structure with an internal diameter of 23 nM and radial spokes connecting to the microtubule triplets.

Its subcellular location is the cytoplasm. The protein resides in the cytoskeleton. It localises to the microtubule organizing center. It is found in the centrosome. Functionally, central scaffolding component of the centrioles ensuring their 9-fold symmetry. Required for centrosome biogenesis and duplication: required both for mother-centriole-dependent centriole duplication and deuterosome-dependent centriole amplification in multiciliated cells. This is Spindle assembly abnormal protein 6 homolog (SASS6) from Gallus gallus (Chicken).